We begin with the raw amino-acid sequence, 351 residues long: C(7)-cyclitol 7-kinase (351 aa).

It belongs to the ROK (NagC/XylR) family.

The enzyme catalyses valienone + ATP = valienone 7-phosphate + ADP + H(+). The catalysed reaction is validone + ATP = validone 7-phosphate + ADP + H(+). In terms of biological role, involved in the biosynthesis of the antifungal agent validamycin A. Catalyzes the phosphorylation of valienone and validone to their 7-phosphate derivatives. The protein is C(7)-cyclitol 7-kinase of Streptomyces hygroscopicus subsp. limoneus.